A 150-amino-acid polypeptide reads, in one-letter code: SsrA-binding protein (150 aa).

This sequence belongs to the SmpB family.

The protein resides in the cytoplasm. Functionally, required for rescue of stalled ribosomes mediated by trans-translation. Binds to transfer-messenger RNA (tmRNA), required for stable association of tmRNA with ribosomes. tmRNA and SmpB together mimic tRNA shape, replacing the anticodon stem-loop with SmpB. tmRNA is encoded by the ssrA gene; the 2 termini fold to resemble tRNA(Ala) and it encodes a 'tag peptide', a short internal open reading frame. During trans-translation Ala-aminoacylated tmRNA acts like a tRNA, entering the A-site of stalled ribosomes, displacing the stalled mRNA. The ribosome then switches to translate the ORF on the tmRNA; the nascent peptide is terminated with the 'tag peptide' encoded by the tmRNA and targeted for degradation. The ribosome is freed to recommence translation, which seems to be the essential function of trans-translation. This Polynucleobacter asymbioticus (strain DSM 18221 / CIP 109841 / QLW-P1DMWA-1) (Polynucleobacter necessarius subsp. asymbioticus) protein is SsrA-binding protein.